The primary structure comprises 83 residues: Conotoxin Pu6.1 (83 aa).

The signal sequence occupies residues 1–19; that stretch reads MKLVLAIVLILMLVSLSTG. Positions 20–42 are excised as a propeptide; it reads AEESGQEISMVGPPLYIWDPIPP. Disulfide bonds link C43-C57, C50-C62, and C56-C78.

Belongs to the conotoxin I3 superfamily. Expressed by the venom duct.

It is found in the secreted. The sequence is that of Conotoxin Pu6.1 from Conus pulicarius (Flea-bitten cone).